Consider the following 372-residue polypeptide: Chorismate synthase (372 aa).

Arg-48 contributes to the NADP(+) binding site. FMN is bound by residues 131–133 (RSS), 243–244 (NA), Gly-288, 303–307 (KPTSS), and Arg-329.

It belongs to the chorismate synthase family. In terms of assembly, homotetramer. Requires FMNH2 as cofactor.

The catalysed reaction is 5-O-(1-carboxyvinyl)-3-phosphoshikimate = chorismate + phosphate. Its pathway is metabolic intermediate biosynthesis; chorismate biosynthesis; chorismate from D-erythrose 4-phosphate and phosphoenolpyruvate: step 7/7. In terms of biological role, catalyzes the anti-1,4-elimination of the C-3 phosphate and the C-6 proR hydrogen from 5-enolpyruvylshikimate-3-phosphate (EPSP) to yield chorismate, which is the branch point compound that serves as the starting substrate for the three terminal pathways of aromatic amino acid biosynthesis. This reaction introduces a second double bond into the aromatic ring system. The protein is Chorismate synthase of Caulobacter vibrioides (strain ATCC 19089 / CIP 103742 / CB 15) (Caulobacter crescentus).